A 376-amino-acid chain; its full sequence is 26S proteasome non-ATPase regulatory subunit 13 (376 aa).

The PCI domain maps to 171–338 (SYYKDALRFL…KRVHMTWVQP (168 aa)). Lysine 298 bears the N6-acetyllysine mark.

Belongs to the proteasome subunit S11 family. As to quaternary structure, component of the 19S proteasome regulatory particle complex. The 26S proteasome consists of a 20S core particle (CP) and two 19S regulatory subunits (RP). The regulatory particle is made of a lid composed of 9 subunits including PSMD13, a base containing 6 ATPases and few additional components.

Its function is as follows. Component of the 26S proteasome, a multiprotein complex involved in the ATP-dependent degradation of ubiquitinated proteins. This complex plays a key role in the maintenance of protein homeostasis by removing misfolded or damaged proteins, which could impair cellular functions, and by removing proteins whose functions are no longer required. Therefore, the proteasome participates in numerous cellular processes, including cell cycle progression, apoptosis, or DNA damage repair. This chain is 26S proteasome non-ATPase regulatory subunit 13, found in Rattus norvegicus (Rat).